A 110-amino-acid chain; its full sequence is Large ribosomal subunit protein uL22 (110 aa).

Belongs to the universal ribosomal protein uL22 family. In terms of assembly, part of the 50S ribosomal subunit.

Its function is as follows. This protein binds specifically to 23S rRNA; its binding is stimulated by other ribosomal proteins, e.g. L4, L17, and L20. It is important during the early stages of 50S assembly. It makes multiple contacts with different domains of the 23S rRNA in the assembled 50S subunit and ribosome. The globular domain of the protein is located near the polypeptide exit tunnel on the outside of the subunit, while an extended beta-hairpin is found that lines the wall of the exit tunnel in the center of the 70S ribosome. This is Large ribosomal subunit protein uL22 from Shewanella denitrificans (strain OS217 / ATCC BAA-1090 / DSM 15013).